Here is a 100-residue protein sequence, read N- to C-terminus: Large ribosomal subunit protein bL27 (100 aa).

Residues 1 to 9 (MLKMNLQLF) constitute a propeptide that is removed on maturation.

Belongs to the bacterial ribosomal protein bL27 family. The N-terminus is cleaved by ribosomal processing cysteine protease Prp.

The sequence is that of Large ribosomal subunit protein bL27 from Clostridium perfringens (strain ATCC 13124 / DSM 756 / JCM 1290 / NCIMB 6125 / NCTC 8237 / Type A).